Here is a 346-residue protein sequence, read N- to C-terminus: Phosphate acyltransferase (346 aa).

It belongs to the PlsX family. In terms of assembly, homodimer. Probably interacts with PlsY.

The protein localises to the cytoplasm. The enzyme catalyses a fatty acyl-[ACP] + phosphate = an acyl phosphate + holo-[ACP]. The protein operates within lipid metabolism; phospholipid metabolism. Catalyzes the reversible formation of acyl-phosphate (acyl-PO(4)) from acyl-[acyl-carrier-protein] (acyl-ACP). This enzyme utilizes acyl-ACP as fatty acyl donor, but not acyl-CoA. The chain is Phosphate acyltransferase from Geotalea uraniireducens (strain Rf4) (Geobacter uraniireducens).